Reading from the N-terminus, the 273-residue chain is Glutamate 5-kinase (273 aa).

K15 contacts ATP. S55, D142, and N158 together coordinate substrate. ATP is bound by residues 178 to 179 and 220 to 226; these read SD and TGGMLSK.

This sequence belongs to the glutamate 5-kinase family.

Its subcellular location is the cytoplasm. It catalyses the reaction L-glutamate + ATP = L-glutamyl 5-phosphate + ADP. Its pathway is amino-acid biosynthesis; L-proline biosynthesis; L-glutamate 5-semialdehyde from L-glutamate: step 1/2. Functionally, catalyzes the transfer of a phosphate group to glutamate to form L-glutamate 5-phosphate. The sequence is that of Glutamate 5-kinase from Streptococcus pyogenes serotype M6 (strain ATCC BAA-946 / MGAS10394).